A 276-amino-acid polypeptide reads, in one-letter code: Cell division protein FtsQ (276 aa).

Residues methionine 1–glycine 27 lie on the Cytoplasmic side of the membrane. Residues isoleucine 28–tryptophan 48 traverse the membrane as a helical segment. Topologically, residues methionine 49 to glutamine 276 are periplasmic. One can recognise a POTRA domain in the interval leucine 55–tyrosine 126. A disordered region spans residues glycine 255–glutamine 276. Low complexity predominate over residues glutamine 266 to glutamine 276.

Belongs to the FtsQ/DivIB family. FtsQ subfamily. In terms of assembly, part of a complex composed of FtsB, FtsL and FtsQ. The complex can be formed before its localization to the division site. This tripartite complex can be divided further into a subcomplex of FtsB and FtsL, which forms in the absence of FtsQ. Interacts with FtsA, FtsK, FtsL, FtsB, FtsW, FtsI, FtsN, FtsX and YmgF.

The protein resides in the cell inner membrane. Functionally, essential cell division protein. May link together the upstream cell division proteins, which are predominantly cytoplasmic, with the downstream cell division proteins, which are predominantly periplasmic. May control correct divisome assembly. The protein is Cell division protein FtsQ of Escherichia coli (strain K12).